We begin with the raw amino-acid sequence, 993 residues long: Receptor-type tyrosine-protein kinase FLT3 (993 aa).

Residues 1–26 form the signal peptide; it reads MPALARDGGQLPLLVVFSAMIFGTIT. Residues 27-543 are Extracellular-facing; that stretch reads NQDLPVIKCV…PFPFIQDNIS (517 aa). Cys-35 and Cys-65 form a disulfide bridge. N-linked (GlcNAc...) asparagine glycosylation is found at Asn-43 and Asn-100. Cys-103 and Cys-114 are disulfide-bonded. Asn-151 is a glycosylation site (N-linked (GlcNAc...) asparagine). Cystine bridges form between Cys-199/Cys-206, Cys-232/Cys-241, and Cys-272/Cys-330. The 91-residue stretch at 253–343 folds into the Ig-like C2-type domain; the sequence is PQTTLPQLFL…KHPSQSALVT (91 aa). N-linked (GlcNAc...) asparagine glycosylation is found at Asn-306, Asn-323, Asn-351, and Asn-354. Disulfide bonds link Cys-368/Cys-407 and Cys-381/Cys-392. N-linked (GlcNAc...) asparagine glycans are attached at residues Asn-473, Asn-502, and Asn-541. The chain crosses the membrane as a helical span at residues 544-563; it reads FYATIGVCLLFIVVLTLLIC. The Cytoplasmic segment spans residues 564–993; sequence HKYKKQFRYE…LSPQAQVEDS (430 aa). Tyr-572 carries the post-translational modification Phosphotyrosine. Ser-574 carries the phosphoserine modification. 3 positions are modified to phosphotyrosine; by autocatalysis: Tyr-589, Tyr-591, and Tyr-599. The segment at 591–597 is important for normal regulation of the kinase activity and for maintaining the kinase in an inactive state in the absence of bound ligand; it reads YVDFREY. Residues 610–943 enclose the Protein kinase domain; that stretch reads LEFGKVLGSG…PSFPNLTSFL (334 aa). Residues 616-624 and Lys-644 each bind ATP; that span reads LGSGAFGKV. A Phosphotyrosine; by autocatalysis modification is found at Tyr-726. Ser-759 is subject to Phosphoserine. 2 positions are modified to phosphotyrosine: Tyr-768 and Tyr-793. Residue Asp-811 is the Proton acceptor of the active site. Phosphotyrosine; by autocatalysis occurs at positions 842, 955, and 969. A Phosphoserine modification is found at Ser-993.

Belongs to the protein kinase superfamily. Tyr protein kinase family. CSF-1/PDGF receptor subfamily. As to quaternary structure, monomer in the absence of bound FLT3LG. Homodimer in the presence of bound FLT3LG. Interacts with FIZ1 following ligand activation. Interacts with FES, FER, LYN, FGR, HCK, SRC and GRB2. Interacts with PTPRJ/DEP-1 and PTPN11/SHP2. Interacts with RNF115 and RNF126. (Microbial infection) Interacts with human cytomegalovirus protein UL7. In terms of processing, N-glycosylated, contains complex N-glycans with sialic acid. Autophosphorylated on several tyrosine residues in response to FLT3LG binding. FLT3LG binding also increases phosphorylation of mutant kinases that are constitutively activated. Dephosphorylated by PTPRJ/DEP-1, PTPN1, PTPN6/SHP-1, and to a lesser degree by PTPN12. Dephosphorylation is important for export from the endoplasmic reticulum and location at the cell membrane. Post-translationally, rapidly ubiquitinated by UBE2L6 and the E3 ubiquitin-protein ligase SIAH1 after autophosphorylation, leading to its proteasomal degradation. As to expression, detected in bone marrow, in hematopoietic stem cells, in myeloid progenitor cells and in granulocyte/macrophage progenitor cells (at protein level). Detected in bone marrow, liver, thymus, spleen and lymph node, and at low levels in kidney and pancreas. Highly expressed in T-cell leukemia.

It localises to the membrane. Its subcellular location is the endoplasmic reticulum lumen. It catalyses the reaction L-tyrosyl-[protein] + ATP = O-phospho-L-tyrosyl-[protein] + ADP + H(+). With respect to regulation, present in an inactive conformation in the absence of bound ligand. FLT3LG binding leads to dimerization and activation by autophosphorylation. Tyrosine-protein kinase that acts as a cell-surface receptor for the cytokine FLT3LG and regulates differentiation, proliferation and survival of hematopoietic progenitor cells and of dendritic cells. Promotes phosphorylation of SHC1 and AKT1, and activation of the downstream effector MTOR. Promotes activation of RAS signaling and phosphorylation of downstream kinases, including MAPK1/ERK2 and/or MAPK3/ERK1. Promotes phosphorylation of FES, FER, PTPN6/SHP, PTPN11/SHP-2, PLCG1, and STAT5A and/or STAT5B. Activation of wild-type FLT3 causes only marginal activation of STAT5A or STAT5B. Mutations that cause constitutive kinase activity promote cell proliferation and resistance to apoptosis via the activation of multiple signaling pathways. This chain is Receptor-type tyrosine-protein kinase FLT3 (FLT3), found in Homo sapiens (Human).